We begin with the raw amino-acid sequence, 62 residues long: Excisionase (62 aa).

The chain is Excisionase (xis) from Streptomyces ambofaciens.